Here is a 362-residue protein sequence, read N- to C-terminus: MASKTRRGSSLAKKEKEIKKEIEEDKEVAPIQEEDDDGPPPILEREASCGENDDTDGDGKEEDAQKEDDIDGSKTKNESILEALSQFFTADDATVKNRRNSPPSESSSTRNTLGLNRGGAIPKALLLNKNLRPVPSKTPPIATTRFASLRHLSSAPGTSASTSGSPSVGIRKYGVPPPMPRSLRNIAGSINVVGSNSSLGPARLLESRKRHFDKDKDGKNPKRSSLVAYNGGRAGENFRKVPPSAVSPAPGSGSSASSGTSTSSSNGIIDVQSMLRDQSPVRMQVMVGGDHETNGDSIQEAMELANAQKESIGNIARASSHHNMLLGSMIINGLNTLQSRDKDEYTNFSSDLFSLITRYNIN.

3 disordered regions span residues 1 to 117, 153 to 172, and 210 to 266; these read MASK…GLNR, SSAP…GIRK, and RHFD…SSSN. Residues 12–23 show a composition bias toward basic and acidic residues; sequence AKKEKEIKKEIE. Positions 51-70 are enriched in acidic residues; the sequence is ENDDTDGDGKEEDAQKEDDI. Composition is skewed to low complexity over residues 100–112, 153–167, and 241–265; these read NSPP…TRNT, SSAP…GSPS, and VPPS…TSSS.

This is an uncharacterized protein from Caenorhabditis elegans.